A 131-amino-acid chain; its full sequence is Large ribosomal subunit protein bL12 (131 aa).

The segment covering 99–125 (ESTPKPIKEGTNKDDAEETKKKLEEAG) has biased composition (basic and acidic residues). The segment at 99 to 131 (ESTPKPIKEGTNKDDAEETKKKLEEAGAKVTVK) is disordered.

This sequence belongs to the bacterial ribosomal protein bL12 family. In terms of assembly, homodimer. Part of the ribosomal stalk of the 50S ribosomal subunit. Forms a multimeric L10(L12)X complex, where L10 forms an elongated spine to which 2 to 4 L12 dimers bind in a sequential fashion. Binds GTP-bound translation factors.

Forms part of the ribosomal stalk which helps the ribosome interact with GTP-bound translation factors. Is thus essential for accurate translation. The protein is Large ribosomal subunit protein bL12 of Gloeothece citriformis (strain PCC 7424) (Cyanothece sp. (strain PCC 7424)).